We begin with the raw amino-acid sequence, 112 residues long: Phosphoribosyl-ATP pyrophosphatase (112 aa).

Belongs to the PRA-PH family.

It localises to the cytoplasm. The catalysed reaction is 1-(5-phospho-beta-D-ribosyl)-ATP + H2O = 1-(5-phospho-beta-D-ribosyl)-5'-AMP + diphosphate + H(+). It participates in amino-acid biosynthesis; L-histidine biosynthesis; L-histidine from 5-phospho-alpha-D-ribose 1-diphosphate: step 2/9. This Chromohalobacter salexigens (strain ATCC BAA-138 / DSM 3043 / CIP 106854 / NCIMB 13768 / 1H11) protein is Phosphoribosyl-ATP pyrophosphatase.